We begin with the raw amino-acid sequence, 59 residues long: Small ribosomal subunit protein bS21 (59 aa).

The tract at residues 39-59 (ETPVEKYKRKQRLKNRTKRRR) is disordered. Over residues 45–59 (YKRKQRLKNRTKRRR) the composition is skewed to basic residues.

This sequence belongs to the bacterial ribosomal protein bS21 family.

The sequence is that of Small ribosomal subunit protein bS21 from Prochlorococcus marinus (strain SARG / CCMP1375 / SS120).